A 289-amino-acid polypeptide reads, in one-letter code: 33 kDa chaperonin (289 aa).

2 disulfides stabilise this stretch: Cys229-Cys231 and Cys262-Cys265.

The protein belongs to the HSP33 family. In terms of processing, under oxidizing conditions two disulfide bonds are formed involving the reactive cysteines. Under reducing conditions zinc is bound to the reactive cysteines and the protein is inactive.

It localises to the cytoplasm. Its function is as follows. Redox regulated molecular chaperone. Protects both thermally unfolding and oxidatively damaged proteins from irreversible aggregation. Plays an important role in the bacterial defense system toward oxidative stress. This chain is 33 kDa chaperonin, found in Pectobacterium atrosepticum (strain SCRI 1043 / ATCC BAA-672) (Erwinia carotovora subsp. atroseptica).